A 147-amino-acid chain; its full sequence is Transcriptional regulator MraZ (147 aa).

SpoVT-AbrB domains are found at residues 5 to 50 and 79 to 122; these read AIAL…PLSA and AQEE…SDAG.

It belongs to the MraZ family. As to quaternary structure, forms oligomers.

The protein localises to the cytoplasm. The protein resides in the nucleoid. This is Transcriptional regulator MraZ from Aromatoleum aromaticum (strain DSM 19018 / LMG 30748 / EbN1) (Azoarcus sp. (strain EbN1)).